Here is a 761-residue protein sequence, read N- to C-terminus: 1,4-alpha-glucan branching enzyme GlgB (761 aa).

Catalysis depends on aspartate 431, which acts as the Nucleophile. Glutamate 484 functions as the Proton donor in the catalytic mechanism.

Belongs to the glycosyl hydrolase 13 family. GlgB subfamily. As to quaternary structure, monomer.

The catalysed reaction is Transfers a segment of a (1-&gt;4)-alpha-D-glucan chain to a primary hydroxy group in a similar glucan chain.. The protein operates within glycan biosynthesis; glycogen biosynthesis. In terms of biological role, catalyzes the formation of the alpha-1,6-glucosidic linkages in glycogen by scission of a 1,4-alpha-linked oligosaccharide from growing alpha-1,4-glucan chains and the subsequent attachment of the oligosaccharide to the alpha-1,6 position. The protein is 1,4-alpha-glucan branching enzyme GlgB of Synechococcus sp. (strain WH7803).